Here is a 186-residue protein sequence, read N- to C-terminus: Acetyltransferase PA2578 (186 aa).

Residues 12–176 form the N-acetyltransferase domain; it reads LQLVPFQLGH…NVVLMGLLRQ (165 aa). CoA-binding positions include glutamine 37, 97-99, glycine 105, asparagine 137, and 142-144; these read IVL and HLY.

Homodimer.

Catalyzes the transfer of an acetyl group from acetyl coenzyme A (AcCoA) to an acceptor substrate and releases both CoA and the acetylated product. It prefers the antibiotic chloramphenicol. This chain is Acetyltransferase PA2578, found in Pseudomonas aeruginosa (strain ATCC 15692 / DSM 22644 / CIP 104116 / JCM 14847 / LMG 12228 / 1C / PRS 101 / PAO1).